A 211-amino-acid chain; its full sequence is Pyridoxine/pyridoxamine 5'-phosphate oxidase (211 aa).

Substrate contacts are provided by residues 8–11 (RKNY) and Lys-66. FMN contacts are provided by residues 61-66 (RIVLLK), 76-77 (FT), Lys-83, and Gln-105. Substrate-binding residues include Tyr-123, Arg-127, and Ser-131. Residues 140-141 (QS) and Trp-184 contribute to the FMN site. 190-192 (RLH) serves as a coordination point for substrate. Arg-194 serves as a coordination point for FMN.

The protein belongs to the pyridoxamine 5'-phosphate oxidase family. As to quaternary structure, homodimer. It depends on FMN as a cofactor.

It catalyses the reaction pyridoxamine 5'-phosphate + O2 + H2O = pyridoxal 5'-phosphate + H2O2 + NH4(+). The catalysed reaction is pyridoxine 5'-phosphate + O2 = pyridoxal 5'-phosphate + H2O2. The protein operates within cofactor metabolism; pyridoxal 5'-phosphate salvage; pyridoxal 5'-phosphate from pyridoxamine 5'-phosphate: step 1/1. Its pathway is cofactor metabolism; pyridoxal 5'-phosphate salvage; pyridoxal 5'-phosphate from pyridoxine 5'-phosphate: step 1/1. Functionally, catalyzes the oxidation of either pyridoxine 5'-phosphate (PNP) or pyridoxamine 5'-phosphate (PMP) into pyridoxal 5'-phosphate (PLP). The protein is Pyridoxine/pyridoxamine 5'-phosphate oxidase of Polynucleobacter asymbioticus (strain DSM 18221 / CIP 109841 / QLW-P1DMWA-1) (Polynucleobacter necessarius subsp. asymbioticus).